The following is a 160-amino-acid chain: Eosinophil cationic protein (160 aa).

The N-terminal stretch at 1–27 is a signal peptide; the sequence is MVPKLFTPQICLLLLLGLMGVEGSLHA. Residues 28–72 are required for nearly all of the bactericidal activities; partially involved in LPS-binding; that stretch reads RPPQFTKAQWFAIQHINVNPPRCTIAMRVINNYQRRCKNQNTFLR. Histidine 42 acts as the Proton acceptor in catalysis. Cystine bridges form between cysteine 50/cysteine 110, cysteine 64/cysteine 123, cysteine 82/cysteine 138, and cysteine 89/cysteine 98. Tyrosine 60 is modified (3'-nitrotyrosine). 65–69 lines the substrate pocket; it reads KNQNT. N-linked (GlcNAc...) asparagine glycosylation is found at asparagine 84, asparagine 92, and asparagine 119. Histidine 155 functions as the Proton donor in the catalytic mechanism.

It belongs to the pancreatic ribonuclease family. In terms of assembly, interacts with bacterial lipopolysaccharide (LPS) and lipoteichoic acid (LTA). In vitro interacts with phospholipid bilayers.

It is found in the secreted. Cytotoxin and helminthotoxin with low-efficiency ribonuclease activity. Possesses a wide variety of biological activities. Exhibits antibacterial activity. The protein is Eosinophil cationic protein (RNASE3) of Macaca nemestrina (Pig-tailed macaque).